A 145-amino-acid polypeptide reads, in one-letter code: Large ribosomal subunit protein uL15 (145 aa).

A disordered region spans residues 1–57; it reads MKLNDLSPAPGSRREKHRPGRGIGSGLGKTGGRGHKGQTSRSGGTIAPGFEGGQQPL. Positions 21–31 are enriched in gly residues; that stretch reads RGIGSGLGKTG.

The protein belongs to the universal ribosomal protein uL15 family. As to quaternary structure, part of the 50S ribosomal subunit.

Binds to the 23S rRNA. The sequence is that of Large ribosomal subunit protein uL15 from Pseudomonas fluorescens (strain SBW25).